The primary structure comprises 498 residues: ATP synthase subunit beta, chloroplastic (498 aa).

Residue 172–179 (GGAGVGKT) participates in ATP binding.

Belongs to the ATPase alpha/beta chains family. F-type ATPases have 2 components, CF(1) - the catalytic core - and CF(0) - the membrane proton channel. CF(1) has five subunits: alpha(3), beta(3), gamma(1), delta(1), epsilon(1). CF(0) has four main subunits: a(1), b(1), b'(1) and c(9-12).

The protein localises to the plastid. It localises to the chloroplast thylakoid membrane. It carries out the reaction ATP + H2O + 4 H(+)(in) = ADP + phosphate + 5 H(+)(out). Produces ATP from ADP in the presence of a proton gradient across the membrane. The catalytic sites are hosted primarily by the beta subunits. The chain is ATP synthase subunit beta, chloroplastic from Saruma henryi (Upright wild ginger).